Consider the following 426-residue polypeptide: UDP-N-acetylmuramoylalanine--D-glutamate ligase (426 aa).

ATP is bound at residue 112–118 (GSVGKST).

It belongs to the MurCDEF family.

Its subcellular location is the cytoplasm. It carries out the reaction UDP-N-acetyl-alpha-D-muramoyl-L-alanine + D-glutamate + ATP = UDP-N-acetyl-alpha-D-muramoyl-L-alanyl-D-glutamate + ADP + phosphate + H(+). It participates in cell wall biogenesis; peptidoglycan biosynthesis. Functionally, cell wall formation. Catalyzes the addition of glutamate to the nucleotide precursor UDP-N-acetylmuramoyl-L-alanine (UMA). The polypeptide is UDP-N-acetylmuramoylalanine--D-glutamate ligase (Thermosipho melanesiensis (strain DSM 12029 / CIP 104789 / BI429)).